A 192-amino-acid polypeptide reads, in one-letter code: NADH:FMN oxidoreductase (192 aa).

The disordered stretch occupies residues Met1–Ala20. FMN-binding positions include Thr60–Ser63, Asn77–Ser84, Ala111, and Arg117.

The protein belongs to the non-flavoprotein flavin reductase family.

The protein resides in the cytoplasm. The enzyme catalyses FMNH2 + NAD(+) = FMN + NADH + 2 H(+). Its pathway is sulfur metabolism; dibenzothiophene degradation. In terms of biological role, an NADH:FMN oxidoreductase which supplies reduced FMN for the '4S' desulfurization pathway that removes covalently bound sulfur from dibenzothiophene (DBT) without breaking carbon-carbon bonds. Provides DszA and DszC (DBTO2-monooxygenase and DBT-monooxygenase respectively) with reduced flavin (FMN). This chain is NADH:FMN oxidoreductase, found in Rhodococcus erythropolis (Arthrobacter picolinophilus).